Here is a 188-residue protein sequence, read N- to C-terminus: uncharacterized protein (188 aa).

Phosphoserine is present on Ser-14. Residues Arg-165–His-188 form a disordered region. Positions Lys-171–His-188 are enriched in basic residues.

Its subcellular location is the nucleus. The protein localises to the nucleolus. This is an uncharacterized protein from Schizosaccharomyces pombe (strain 972 / ATCC 24843) (Fission yeast).